Here is a 308-residue protein sequence, read N- to C-terminus: Glutaminase (308 aa).

The substrate site is built by serine 66, asparagine 117, glutamate 162, asparagine 169, tyrosine 193, tyrosine 244, and valine 262.

It belongs to the glutaminase family. In terms of assembly, homotetramer.

The enzyme catalyses L-glutamine + H2O = L-glutamate + NH4(+). This is Glutaminase from Natranaerobius thermophilus (strain ATCC BAA-1301 / DSM 18059 / JW/NM-WN-LF).